A 455-amino-acid polypeptide reads, in one-letter code: Ribosomal protein uS12 methylthiotransferase RimO (455 aa).

The MTTase N-terminal domain occupies 10 to 126 (RKVSMISLGC…ILELIEAHDR (117 aa)). [4Fe-4S] cluster is bound by residues C19, C55, C89, C164, C168, and C171. One can recognise a Radical SAM core domain in the interval 150–380 (SSPFYSTYVK…MKAQQRVSFR (231 aa)). The TRAM domain occupies 383 to 451 (RALIGRVEPV…EYDLIGEIVD (69 aa)).

This sequence belongs to the methylthiotransferase family. RimO subfamily. Requires [4Fe-4S] cluster as cofactor.

Its subcellular location is the cytoplasm. The enzyme catalyses L-aspartate(89)-[ribosomal protein uS12]-hydrogen + (sulfur carrier)-SH + AH2 + 2 S-adenosyl-L-methionine = 3-methylsulfanyl-L-aspartate(89)-[ribosomal protein uS12]-hydrogen + (sulfur carrier)-H + 5'-deoxyadenosine + L-methionine + A + S-adenosyl-L-homocysteine + 2 H(+). In terms of biological role, catalyzes the methylthiolation of an aspartic acid residue of ribosomal protein uS12. The chain is Ribosomal protein uS12 methylthiotransferase RimO from Syntrophotalea carbinolica (strain DSM 2380 / NBRC 103641 / GraBd1) (Pelobacter carbinolicus).